The sequence spans 306 residues: MINSQNTLYLQTKPYWDYLRIEKQASQHTLSNYQRQLLAVSDMLSQAGISTWQEVNSATVRWIIAQSNKQGLGAKSIALRLVALRQWFSYLIRQEKMSVNPAVGIKAPKASKRLPKNIDAEQIGQLLTSDSHEPSDLRDLAMMELMYSSGLRLSELQGLDLGDMDLAGREVRLLGKGNKERIVPIGSKALEALNRWLAVRNQFKPQDNAVFLNKRGGRLSHRSIQLVMQKWGEKQGLESHLHPHKLRHSFATHMLEASGDLRAVQELLGHSNLATTQIYTHLDFQHLAKIYDAAHPRAKRKKQDDD.

The Core-binding (CB) domain maps to 6–92 (NTLYLQTKPY…ALRQWFSYLI (87 aa)). The Tyr recombinase domain occupies 113 to 292 (RLPKNIDAEQ…DFQHLAKIYD (180 aa)). Catalysis depends on residues arginine 152, lysine 176, histidine 244, arginine 247, and histidine 270. Catalysis depends on tyrosine 279, which acts as the O-(3'-phospho-DNA)-tyrosine intermediate.

It belongs to the 'phage' integrase family. XerC subfamily. Forms a cyclic heterotetrameric complex composed of two molecules of XerC and two molecules of XerD.

It localises to the cytoplasm. In terms of biological role, site-specific tyrosine recombinase, which acts by catalyzing the cutting and rejoining of the recombining DNA molecules. The XerC-XerD complex is essential to convert dimers of the bacterial chromosome into monomers to permit their segregation at cell division. It also contributes to the segregational stability of plasmids. The polypeptide is Tyrosine recombinase XerC (Actinobacillus pleuropneumoniae serotype 7 (strain AP76)).